The primary structure comprises 112 residues: Large ribosomal subunit protein P1w (112 aa).

The segment at 85–112 (AAAPAAEEKKKDEPAEESDGDLGFGLFD) is disordered. Residue Ser-102 is modified to Phosphoserine.

The protein belongs to the eukaryotic ribosomal protein P1/P2 family. As to quaternary structure, P1 and P2 exist as dimers at the large ribosomal subunit.

Plays an important role in the elongation step of protein synthesis. This Arabidopsis thaliana (Mouse-ear cress) protein is Large ribosomal subunit protein P1w (RPP1A).